Here is a 113-residue protein sequence, read N- to C-terminus: Dynein light chain Tctex-type 1 (113 aa).

M1 is modified (N-acetylmethionine). The interaction with GNB1 stretch occupies residues 41–113 (QWTTNVVEQT…CIVSAFGLSI (73 aa)).

This sequence belongs to the dynein light chain Tctex-type family. Homodimer. The cytoplasmic dynein 1 complex consists of two catalytic heavy chains (HCs) and a number of non-catalytic subunits presented by intermediate chains (ICs), light intermediate chains (LICs) and light chains (LCs); the composition seems to vary in respect to the IC, LIC and LC composition. The heavy chain homodimer serves as a scaffold for the probable homodimeric assembly of the respective non-catalytic subunits. The ICs and LICs bind directly to the HC dimer and dynein LCs assemble on the IC dimer. DYNLT1 and DYNLT3 compete for association with dynein IC (DYNC1I1 or DYNC1I2). Self-associates. Interacts with RHO. Interacts with DYNC1I1 and DYNC1I2. Interacts with DOC2A, DOC2B and SCN10A. Interacts with PVR. Interacts with SVIL isoform 2. Interacts with GNB1; the interaction occurs in presence of guanine nucleotide-binding protein G(T) subunit gamma; the interaction diminishes the association of DYNLT1 with dynein IC (DYNC1I1 or DYNC1I2). Interacts with GNB2, GNB3 and GNB5; the interactions occur in presence of guanine nucleotide-binding protein G(T) subunit gamma. Interacts with ACVR2B and ARHGEF2. Interacts with DNAI4. Interacts with CFAP61. Post-translationally, phosphorylated by BMPR2. The phosphorylation status is proposed to regulate the association with the cytoplasmic dynein complex and may have role in cytoplasmic dynein cargo release.

Its subcellular location is the golgi apparatus. The protein resides in the cytoplasm. The protein localises to the cytoskeleton. It is found in the spindle. Acts as one of several non-catalytic accessory components of the cytoplasmic dynein 1 complex that are thought to be involved in linking dynein to cargos and to adapter proteins that regulate dynein function. Cytoplasmic dynein 1 acts as a motor for the intracellular retrograde motility of vesicles and organelles along microtubules. Binds to transport cargos and is involved in apical cargo transport such as rhodopsin-bearing vesicles in polarized epithelia. Is involved in intracellular targeting of D-type retrovirus gag polyproteins to the cytoplasmic assembly site. May also be a accessory component of axonemal dynein. Its function is as follows. Plays a role in neuronal morphogenesis; the function is independent of cytoplasmic dynein and seems to be coupled to regulation of the actin cytoskeleton by enhancing Rac1 activity. Required for neurite outgrowth. The function in neurogenesis may be regulated by association with a G-protein beta-gamma dimer. May function as a receptor-independent activator of heterotrimeric G-protein signaling; the activation appears to be independent of a nucleotide exchange. Plays a role in regulating neurogenesis; inhibits the genesis of neurons from precursor cells during cortical development presumably by antagonizing ARHGEF2. Unrelated to the role in retrograde microtubule-associated movement may play a role in the dimerization of cytoplasmic proteins/domains such as for ACVR2B. Binds to the cytoplasmic domain of ACVR2B and, in vitro, inhibits ACVR2B signaling. Involved in the regulation of mitotic spindle orientation. This Rattus norvegicus (Rat) protein is Dynein light chain Tctex-type 1 (Dynlt1).